An 83-amino-acid polypeptide reads, in one-letter code: ATP synthase subunit c (83 aa).

Transmembrane regions (helical) follow at residues 9–29 and 51–71; these read LICV…GIGI and MVFM…GLVI.

It belongs to the ATPase C chain family. F-type ATPases have 2 components, F(1) - the catalytic core - and F(0) - the membrane proton channel. F(1) has five subunits: alpha(3), beta(3), gamma(1), delta(1), epsilon(1). F(0) has three main subunits: a(1), b(2) and c(10-14). The alpha and beta chains form an alternating ring which encloses part of the gamma chain. F(1) is attached to F(0) by a central stalk formed by the gamma and epsilon chains, while a peripheral stalk is formed by the delta and b chains.

Its subcellular location is the cell inner membrane. Its function is as follows. F(1)F(0) ATP synthase produces ATP from ADP in the presence of a proton or sodium gradient. F-type ATPases consist of two structural domains, F(1) containing the extramembraneous catalytic core and F(0) containing the membrane proton channel, linked together by a central stalk and a peripheral stalk. During catalysis, ATP synthesis in the catalytic domain of F(1) is coupled via a rotary mechanism of the central stalk subunits to proton translocation. In terms of biological role, key component of the F(0) channel; it plays a direct role in translocation across the membrane. A homomeric c-ring of between 10-14 subunits forms the central stalk rotor element with the F(1) delta and epsilon subunits. This Desulfotalea psychrophila (strain LSv54 / DSM 12343) protein is ATP synthase subunit c.